The primary structure comprises 875 residues: Receptor-like protein 33 (875 aa).

The signal sequence occupies residues 1-23 (MSLIPITFYFLFLFFSNFRGVFA). The Extracellular portion of the chain corresponds to 24–822 (VPNIHLCHFE…GESETLESEQ (799 aa)). Residues Asn-65, Asn-103, Asn-133, Asn-146, and Asn-181 are each glycosylated (N-linked (GlcNAc...) asparagine). LRR repeat units lie at residues 110-133 (FHFL…SIGN), 134-157 (LSHL…SLGN), 159-182 (FHLT…LGNL), 183-205 (SYLT…SFGS), 206-230 (LNQL…VINL), 231-254 (TKLS…ITSL), 256-278 (ILES…LFTI), 280-302 (SITL…NISS), 303-327 (PSNL…ISRL), and 329-351 (NLRT…IFSH). N-linked (GlcNAc...) asparagine glycans are attached at residues Asn-229 and Asn-250. The N-linked (GlcNAc...) asparagine glycan is linked to Asn-299. An LRR 11; degenerate repeat occupies 352–377 (LKLLGNLYLSHSNTTTTIDLNAVLSC). N-linked (GlcNAc...) asparagine glycans are attached at residues Asn-364, Asn-395, and Asn-411. LRR repeat units follow at residues 378–401 (FKML…SVSD), 404–427 (LGLI…LRTQ), 428–451 (RQMR…LLLQ), 455–477 (MHIS…TVVP), 479–502 (PSMK…ICSL), 503–528 (RSLI…KFKS), 530–549 (LSDL…KTII), 550–573 (KSLR…LIHF), 575–596 (TLEV…WLSS), 597–619 (LKKL…KTRF), 620–643 (PKLR…CFVE), 686–710 (LKIY…IGLL), 711–734 (KELH…MGNL), 735–758 (RELE…LGNL), and 760–783 (YLAY…QFRT). Asn-490 and Asn-514 each carry an N-linked (GlcNAc...) asparagine glycan. The N-linked (GlcNAc...) asparagine glycan is linked to Asn-587. Residue Asn-633 is glycosylated (N-linked (GlcNAc...) asparagine). N-linked (GlcNAc...) asparagine glycans are attached at residues Asn-717, Asn-757, and Asn-765. Residues 823 to 843 (VLSWIAAAIGFTPGIVLGLTI) form a helical membrane-spanning segment. Over 844-875 (GHIVLSSKPRWFFKVLYINNSRRRRRTRSEKS) the chain is Cytoplasmic.

It belongs to the RLP family.

It localises to the cell membrane. The polypeptide is Receptor-like protein 33 (Arabidopsis thaliana (Mouse-ear cress)).